We begin with the raw amino-acid sequence, 326 residues long: Protoheme IX farnesyltransferase (326 aa).

8 helical membrane passes run 35-55 (LIPL…GWPL), 60-80 (LVCT…LNCL), 106-126 (SAFI…VSGV), 129-149 (LAAG…TALL), 157-177 (IVIG…AATG), 185-205 (WLFA…ALLL), 242-262 (GFGV…LLPF), and 283-303 (AKGL…LLIL).

This sequence belongs to the UbiA prenyltransferase family. Protoheme IX farnesyltransferase subfamily.

Its subcellular location is the cell inner membrane. The enzyme catalyses heme b + (2E,6E)-farnesyl diphosphate + H2O = Fe(II)-heme o + diphosphate. The protein operates within porphyrin-containing compound metabolism; heme O biosynthesis; heme O from protoheme: step 1/1. Its function is as follows. Converts heme B (protoheme IX) to heme O by substitution of the vinyl group on carbon 2 of heme B porphyrin ring with a hydroxyethyl farnesyl side group. The chain is Protoheme IX farnesyltransferase from Parasynechococcus marenigrum (strain WH8102).